The primary structure comprises 600 residues: Proton channel OTOP1 (600 aa).

A disordered region spans residues 1–50; sequence MPGDRGALSSPAASSGSPSAAPSGIAACPPPPSPLARASPQASGPRRGAS. At 1–56 the chain is on the cytoplasmic side; that stretch reads MPGDRGALSSPAASSGSPSAAPSGIAACPPPPSPLARASPQASGPRRGASVPQKLA. Residues 7-27 show a composition bias toward low complexity; that stretch reads ALSSPAASSGSPSAAPSGIAA. The helical transmembrane segment at 57 to 78 threads the bilayer; that stretch reads ETLSSQYGLNVFVAGLLFLLAW. Topologically, residues 79 to 86 are extracellular; sequence AVHATGVG. The chain crosses the membrane as a helical span at residues 87–110; it reads KSDLLCVLTALMLLQLLWMLWYVG. Over 111-128 the chain is Cytoplasmic; it reads RSYMQRRLIRPKDTHAGA. A helical transmembrane segment spans residues 129-151; sequence RWLRGSITLFAFITIVLGCLKVA. At 152-161 the chain is on the extracellular side; sequence YFIGFSECLS. A helical membrane pass occupies residues 162 to 186; that stretch reads ATEGVFPVTHAVHTLLQVYFLWGHA. The Cytoplasmic segment spans residues 187-194; that stretch reads KDIIMSFK. The helical transmembrane segment at 195 to 221 threads the bilayer; the sequence is TLERFGVIHSVFTNLLLWANSVLNESK. Residues 222–262 are Extracellular-facing; that stretch reads HQLNEHKERLITLGFGNITIVLDDHTPQCNCTPPALCSALS. A helical transmembrane segment spans residues 263–288; it reads HGIYYLYPFNIEYQILASTMLYVLWK. At 289–309 the chain is on the cytoplasmic side; that stretch reads NIGRRVDSSRHQKMQCRFDGV. A helical membrane pass occupies residues 310–332; it reads LVGSVLGLTVLAATIAVVVVYMI. The Extracellular segment spans residues 333-342; it reads HIGRSKSKSE. The chain crosses the membrane as a helical span at residues 343–368; that stretch reads SALIMFYLYAITVLLLMGAAGLVGSW. The Cytoplasmic portion of the chain corresponds to 369–386; the sequence is IYRVDEKSLDESKNPARK. A helical membrane pass occupies residues 387–411; that stretch reads LDADLLVATASGSWLLSWGSILAIA. At 412–421 the chain is on the extracellular side; the sequence is CAETRPPYTW. The chain crosses the membrane as a helical span at residues 422 to 442; the sequence is YNLPYSVLVIVEKYVQNIFII. Over 443–532 the chain is Cytoplasmic; sequence ESVHLEPEGV…QGGMKRRLLR (90 aa). The helical transmembrane segment at 533–551 threads the bilayer; it reads NITAFLFLCNISLWIPPAF. The Extracellular portion of the chain corresponds to 552 to 569; that stretch reads GCRPEYDNGLEEIVFGFE. Residues 570 to 593 form a helical membrane-spanning segment; the sequence is PWIIVVNLAMPFSIFYRMHAAAAL. The Cytoplasmic portion of the chain corresponds to 594 to 600; it reads FEVYCKI.

The protein belongs to the otopetrin family. As to quaternary structure, homodimer. Interacts with STAT1, independently of STAT1 phosphorylation status.

It localises to the cell membrane. It is found in the cell projection. Its subcellular location is the microvillus. The enzyme catalyses H(+)(in) = H(+)(out). With respect to regulation, activated by both acid and alkali, with proton influx in response to extracellular acid and proton efflux during alkali stimulation. Inhibited by Zn(2+); this inhibition is thought to be pH-sensitive. Currents evoked in response to mild acid (pH 6.0) stimulus may also be mildly potentiated by exposure to Zn(2+). Activated by NH(4)Cl. Proton-selective ion channel. Biphasically modulated by acid and alkali, mediating proton influx and efflux in response to extracellular acid and base stimulation, respectively. Sour taste receptor, which carries inward currents in response to extracellular acidification. Sensor for ammonium chloride (NH(4)Cl) in taste receptor cells. NH(4)Cl acts by increasing the intracellular pH, thereby generating a driving force for proton entry through OTOP1 channel. Might also participate in alkaline sensation. Plays a role in the regulation of Ca(2+) flux in response to purigenic (ATP, ADP and UDP) stimuli, leading to increase in cytosolic Ca(2+) due to influx of extracellular calcium. May play this role by inhibiting P2Y purinoceptor-mediated Ca(2+) release in a Ca(2+)-dependent manner and promote an influx of Ca(2+) in response to ATP. Through this mechanism and possibly others, plays a role in the formation and function of calcium carbonate-based structures in the vestibular system of the inner ear, called otoconia, that sense gravity and linear acceleration. In obesity, may attenuate adipose tissue inflammation, through the negative regulation of IFNG signaling, hence may play an adaptive role in the maintainance of metabolic homeostasis. Following alkali activation, may also be permeable Na(+), K(+), Cs(+) and Li(+). This is Proton channel OTOP1 from Rattus norvegicus (Rat).